Consider the following 156-residue polypeptide: Cyclic pyranopterin monophosphate synthase (156 aa).

Substrate-binding positions include 73 to 75 and 110 to 111; these read LCH and ME. The active site involves D125.

This sequence belongs to the MoaC family. As to quaternary structure, homohexamer; trimer of dimers.

It carries out the reaction (8S)-3',8-cyclo-7,8-dihydroguanosine 5'-triphosphate = cyclic pyranopterin phosphate + diphosphate. It functions in the pathway cofactor biosynthesis; molybdopterin biosynthesis. In terms of biological role, catalyzes the conversion of (8S)-3',8-cyclo-7,8-dihydroguanosine 5'-triphosphate to cyclic pyranopterin monophosphate (cPMP). The chain is Cyclic pyranopterin monophosphate synthase from Stutzerimonas stutzeri (strain A1501) (Pseudomonas stutzeri).